Here is a 340-residue protein sequence, read N- to C-terminus: Mitotic checkpoint protein BUB3.1 (340 aa).

The segment at methionine 1–isoleucine 20 is disordered. WD repeat units follow at residues proline 15 to glutamate 54, threonine 96 to arginine 135, leucine 142 to glutamine 179, aspartate 239 to glutamine 278, and lysine 281 to asparagine 324.

It belongs to the WD repeat BUB3 family. Part of the mitotic checkpoint complex (MCC); interacts with CDC20-1 and CDC20-2. Interacts with MAD2 and BUBR1. Expressed in actively dividing tissues, early in organ development, in young leaves, lateral root primordia and root meristems, flower buds, flowers and siliques.

Its subcellular location is the nucleus. The protein localises to the chromosome. The protein resides in the centromere. It is found in the kinetochore. It localises to the cytoplasm. Its subcellular location is the cytoskeleton. The protein localises to the phragmoplast. The protein resides in the spindle. Has a dual function in spindle-assembly checkpoint signaling and in promoting the establishment of correct kinetochore-microtubule (K-MT) attachments. Promotes the formation of stable end-on bipolar attachments. Necessary for kinetochore localization of BUB1. The BUB1/BUB3 complex plays a role in the inhibition of anaphase-promoting complex or cyclosome (APC/C) when spindle-assembly checkpoint is activated and inhibits the ubiquitin ligase activity of APC/C by phosphorylating its activator CDC20. Essential for gametophyte development. The protein is Mitotic checkpoint protein BUB3.1 (BUB3.1) of Arabidopsis thaliana (Mouse-ear cress).